The chain runs to 399 residues: Lovastatin esterase (399 aa).

The active-site Nucleophile is the S57. Active-site proton acceptor residues include K60 and Y170.

Belongs to the class-A beta-lactamase family.

The enzyme catalyses lovastatin + H2O = monacolin J + (S)-2-methylbutanoate + H(+). The catalysed reaction is pravastatin lactone + H2O = pravastatin diol lactone + (S)-2-methylbutanoate + H(+). It carries out the reaction mevastatin + H2O = compactin diol lactone + (S)-2-methylbutanoate + H(+). Esterase that can hydrolyze the side chain of lovastatin to produce monacolin J. Is also able to hydrolyze the side chains of mevastatin and pravastatin, but not simvastatin. The polypeptide is Lovastatin esterase (Penicillium rubens (strain ATCC 28089 / DSM 1075 / NRRL 1951 / Wisconsin 54-1255) (Penicillium chrysogenum)).